Reading from the N-terminus, the 292-residue chain is Inhibitory synaptic factor 1 (292 aa).

The segment at 1–25 (MNIRGAPDLGQPSDDPNSGGERERI) is disordered. Residues 30-63 (KMVIGQLEGILRELKEVAKELREVVSQIDKLTSD) adopt a coiled-coil conformation. The tract at residues 120 to 292 (TPSDSVDGPE…ATKQKAKGKN (173 aa)) is disordered. The span at 180-192 (GTRERVRFSDKVL) shows a compositional bias: basic and acidic residues. A compositionally biased stretch (acidic residues) spans 198-216 (CDDEEGDGEEGEEEEEGDL). Residues 263 to 285 (RNSSTQTVSDKSTQTVLPYTATK) show a composition bias toward polar residues.

Belongs to the INSYN1 family. In terms of assembly, interacts with GPHN.

The protein localises to the postsynaptic density. Component of the protein machinery at the inhibitory synapses, probably acting as a scaffold. Inhibitory synapses dampen neuronal activity through postsynaptic hyperpolarization. This synaptic inhibition is fundamental for the functioning of the central nervous system, shaping and orchestrating the flow of information through neuronal networks to generate a precise neural code. This Mus musculus (Mouse) protein is Inhibitory synaptic factor 1 (Insyn1).